A 101-amino-acid polypeptide reads, in one-letter code: Urease subunit beta (101 aa).

It belongs to the urease beta subunit family. In terms of assembly, heterotrimer of UreA (gamma), UreB (beta) and UreC (alpha) subunits. Three heterotrimers associate to form the active enzyme.

It localises to the cytoplasm. The enzyme catalyses urea + 2 H2O + H(+) = hydrogencarbonate + 2 NH4(+). It participates in nitrogen metabolism; urea degradation; CO(2) and NH(3) from urea (urease route): step 1/1. The protein is Urease subunit beta of Actinobacillus pleuropneumoniae serotype 5b (strain L20).